A 158-amino-acid polypeptide reads, in one-letter code: Persistence and stress-resistance toxin PasT (158 aa).

Residues 70–158 (GISKTFTTRN…VRAKEVYSAR (89 aa)) are required for resistance of nitrosative stress but not persistence or toxic effects.

This sequence belongs to the ribosome association toxin RatA family. Associates with 50S ribosomes.

Functionally, toxic component of a type II toxin-antitoxin (TA) system. Binds to 50S ribosomal subunits, preventing them from associating with 30S subunits to form 70S ribosomes. In this strain of E.coli low levels of PasT complement operon disruption, however high levels are toxic; their effects are abrogated by high level expression of cognate antitoxin PasI. Plays a role in persistence after antibiotic exposure and survival of nitrosative stress; the toxic and persistence phenotypes are conferred by the same N-terminal region of the protein, while the stress resistance effects can be uncoupled from them in deletion mutants. The sequence is that of Persistence and stress-resistance toxin PasT (pasT) from Escherichia coli O6:H1 (strain CFT073 / ATCC 700928 / UPEC).